We begin with the raw amino-acid sequence, 60 residues long: Large ribosomal subunit protein bL32 (60 aa).

The span at 1 to 16 (MAVPKKKTSKSRKNMR) shows a compositional bias: basic residues. The segment at 1–20 (MAVPKKKTSKSRKNMRRAHD) is disordered.

This sequence belongs to the bacterial ribosomal protein bL32 family.

In Geobacter metallireducens (strain ATCC 53774 / DSM 7210 / GS-15), this protein is Large ribosomal subunit protein bL32.